Consider the following 218-residue polypeptide: MAAPRISFSPSDILFGVLDRLFKDNATGKVLASRVAVVILLFIMAIVWYRGDSFFEYYKQSKYETYSEIIEKERTARFESVALEQLQIVHISSEADFSAVYSFRPKNLNYFVDIIAYEGKLPSTISEKSLGGYPVDKTMDEYTVHLNGRHYYSNSKFAFLPTKKPTPEINYMYSCPYFNLDNIYAGTITMYWYRNDHISNDRLESICAQAARILGRAK.

The Cytoplasmic portion of the chain corresponds to 1-34; sequence MAAPRISFSPSDILFGVLDRLFKDNATGKVLASR. Residues 35–49 form a helical; Signal-anchor for type II membrane protein membrane-spanning segment; that stretch reads VAVVILLFIMAIVWY. Over 50-218 the chain is Periplasmic; it reads RGDSFFEYYK…QAARILGRAK (169 aa). Residues Cys-175 and Cys-207 are joined by a disulfide bond.

Belongs to the T4likevirus holin family. As to quaternary structure, homomultimer. Heterotetramer composed of 2 holin and 2 antiholin. The holin-antiholin complex binds dsDNA. Interacts (via C-terminus) with antiholin (via C-terminus); this interaction blocks the holin homomultimerization and delays host cell lysis. Interacts (via N-terminus) with the lysis inhibition accessory protein rIII; this interaction stabilizes the holin-antiholin complex thereby resulting in a robust block of the hole formation. In terms of processing, disulfide bond is required for functionality.

Its subcellular location is the host cell inner membrane. In terms of biological role, accumulates harmlessly in the cytoplasmic membrane until it reaches a critical concentration that triggers the formation of micron-scale pores (holes) causing host cell membrane disruption and endolysin escape into the periplasmic space. Determines the precise timing of host cell lysis. Regulated by specific antiholins that somehow sense superinfections and then delay lysis. Participates with the endolysin and spanin proteins in the sequential events which lead to the programmed host cell lysis releasing the mature viral particles from the host cell. The chain is Holin (t) from Escherichia coli (Bacteriophage T4).